The sequence spans 44 residues: Conotoxin Cl9a (44 aa).

Glutamate 7, glutamate 8, and glutamate 24 each carry 4-carboxyglutamate. Cystine bridges form between cysteine 9-cysteine 33, cysteine 15-cysteine 40, and cysteine 23-cysteine 42.

As to expression, expressed by the venom duct.

It is found in the secreted. This chain is Conotoxin Cl9a, found in Californiconus californicus (California cone).